Consider the following 614-residue polypeptide: Probable peptide-binding protein YejA (614 aa).

The signal sequence occupies residues 1 to 27; the sequence is MILAPLKSRILIALAASALLIPAVASA.

It belongs to the bacterial solute-binding protein 5 family. In terms of assembly, the complex is composed of one ATP-binding protein (YejF), two transmembrane proteins (YejB and YejE) and a solute-binding protein (YejA).

Its subcellular location is the periplasm. Its function is as follows. Probably part of the ABC transporter complex YejABEF, which is likely involved in broad-spectrum peptide import. The polypeptide is Probable peptide-binding protein YejA (Agrobacterium fabrum (strain C58 / ATCC 33970) (Agrobacterium tumefaciens (strain C58))).